Here is a 508-residue protein sequence, read N- to C-terminus: Light-independent protochlorophyllide reductase subunit B (508 aa).

Asp-36 contacts [4Fe-4S] cluster. Residue Asp-294 is the Proton donor of the active site. 429–430 provides a ligand contact to substrate; sequence GM.

Belongs to the ChlB/BchB/BchZ family. In terms of assembly, protochlorophyllide reductase is composed of three subunits; ChlL, ChlN and ChlB. Forms a heterotetramer of two ChlB and two ChlN subunits. [4Fe-4S] cluster serves as cofactor.

It catalyses the reaction chlorophyllide a + oxidized 2[4Fe-4S]-[ferredoxin] + 2 ADP + 2 phosphate = protochlorophyllide a + reduced 2[4Fe-4S]-[ferredoxin] + 2 ATP + 2 H2O. It functions in the pathway porphyrin-containing compound metabolism; chlorophyll biosynthesis (light-independent). Component of the dark-operative protochlorophyllide reductase (DPOR) that uses Mg-ATP and reduced ferredoxin to reduce ring D of protochlorophyllide (Pchlide) to form chlorophyllide a (Chlide). This reaction is light-independent. The NB-protein (ChlN-ChlB) is the catalytic component of the complex. The polypeptide is Light-independent protochlorophyllide reductase subunit B (Thermosynechococcus vestitus (strain NIES-2133 / IAM M-273 / BP-1)).